The sequence spans 197 residues: Protein-S-isoprenylcysteine O-methyltransferase A (197 aa).

Transmembrane regions (helical) follow at residues 16 to 36, 52 to 72, and 81 to 101; these read MLLS…TIHG, ALAM…FPGL, and FGLI…ITAG. Residues 116–119, Tyr124, and 129–132 each bind S-adenosyl-L-methionine; these read HGLV and HPSY. A helical membrane pass occupies residues 140–160; it reads VGTQVMLCNPVSAVAFAVVVW. Arg166 lines the substrate pocket. An S-adenosyl-L-methionine-binding site is contributed by Glu170.

The protein belongs to the class VI-like SAM-binding methyltransferase superfamily. Isoprenylcysteine carboxyl methyltransferase family. It depends on Zn(2+) as a cofactor. Expressed primarily in flowers, stems, leaves and roots. Almost not expressed in siliques. Detected in root tips and vascular tissues of roots, cotyledons, petiols, hypocotyls, filaments, pollen grains and the distal and proximal portions of the gynoecium.

Its subcellular location is the endoplasmic reticulum membrane. It catalyses the reaction [protein]-C-terminal S-[(2E,6E)-farnesyl]-L-cysteine + S-adenosyl-L-methionine = [protein]-C-terminal S-[(2E,6E)-farnesyl]-L-cysteine methyl ester + S-adenosyl-L-homocysteine. Its activity is regulated as follows. Inhibited by farnesylthioacetic acid (FTAA) and N-acetyl-S-trans, trans-farnesyl-l-cysteine (AFC). Functionally, catalyzes the post-translational methylation of isoprenylated C-terminal cysteine residues, resulting in the modulation of the function of prenylated proteins. Involved in negative regulation of abscisic acid signaling. Carboxyl methylation is a reversible and potentially regulated step in the post-translational modification of prenylated proteins. This Arabidopsis thaliana (Mouse-ear cress) protein is Protein-S-isoprenylcysteine O-methyltransferase A.